Here is a 227-residue protein sequence, read N- to C-terminus: Phosphoribosylformylglycinamidine synthase subunit PurQ (227 aa).

Positions 3–225 (FAVIVFPGSN…LKQWRETYVV (223 aa)) constitute a Glutamine amidotransferase type-1 domain. Residue C86 is the Nucleophile of the active site. Residues H194 and E196 contribute to the active site.

As to quaternary structure, part of the FGAM synthase complex composed of 1 PurL, 1 PurQ and 2 PurS subunits.

The protein resides in the cytoplasm. It carries out the reaction N(2)-formyl-N(1)-(5-phospho-beta-D-ribosyl)glycinamide + L-glutamine + ATP + H2O = 2-formamido-N(1)-(5-O-phospho-beta-D-ribosyl)acetamidine + L-glutamate + ADP + phosphate + H(+). The enzyme catalyses L-glutamine + H2O = L-glutamate + NH4(+). It participates in purine metabolism; IMP biosynthesis via de novo pathway; 5-amino-1-(5-phospho-D-ribosyl)imidazole from N(2)-formyl-N(1)-(5-phospho-D-ribosyl)glycinamide: step 1/2. Functionally, part of the phosphoribosylformylglycinamidine synthase complex involved in the purines biosynthetic pathway. Catalyzes the ATP-dependent conversion of formylglycinamide ribonucleotide (FGAR) and glutamine to yield formylglycinamidine ribonucleotide (FGAM) and glutamate. The FGAM synthase complex is composed of three subunits. PurQ produces an ammonia molecule by converting glutamine to glutamate. PurL transfers the ammonia molecule to FGAR to form FGAM in an ATP-dependent manner. PurS interacts with PurQ and PurL and is thought to assist in the transfer of the ammonia molecule from PurQ to PurL. The polypeptide is Phosphoribosylformylglycinamidine synthase subunit PurQ (Bacillus mycoides (strain KBAB4) (Bacillus weihenstephanensis)).